The chain runs to 76 residues: Dermaseptin-B4 (76 aa).

The signal sequence occupies residues 1–22; it reads MAFLKKSLFLVLFLGLVSLSIC. The propeptide occupies 23–43; that stretch reads EEEKRENKDEIEQEDDEQSEE. The residue at position 73 (Gln73) is a Glutamine amide. The propeptide occupies 75–76; sequence EQ.

The protein belongs to the frog skin active peptide (FSAP) family. Dermaseptin subfamily. As to expression, expressed by the skin glands.

It localises to the secreted. Its function is as follows. Potent antimicrobial peptide with potent activity against Gram-positive and Gram-negative bacteria. Probably acts by disturbing membrane functions with its amphipathic structure. Has an activity of stimulation of insulin release, which may protect the species from being eaten by predators by causing fatal hypoglycemia. Has hemolytic activity. The chain is Dermaseptin-B4 from Phyllomedusa bicolor (Two-colored leaf frog).